The primary structure comprises 720 residues: Beta-glucan synthesis-associated protein KRE6 (720 aa).

3 stretches are compositionally biased toward polar residues: residues 1-17 (MPLR…STNL), 31-51 (LSSS…NAGL), and 69-90 (SLSS…HDNS). The segment at 1-90 (MPLRNLTETH…SDSSLLHDNS (90 aa)) is disordered. Residues 1 to 252 (MPLRNLTETH…KYMDKRSASG (252 aa)) lie on the Cytoplasmic side of the membrane. Serine 81, serine 116, serine 133, serine 134, serine 136, and serine 139 each carry phosphoserine. Disordered regions lie at residues 117–142 (TAND…SNLS) and 167–189 (QLNH…SFSS). A compositionally biased stretch (low complexity) spans 133-142 (SSPSLNSNLS). Residues 253 to 273 (LAGVLLLFLAAIFIFIVLPAL) traverse the membrane as a helical; Signal-anchor for type II membrane protein segment. At 274 to 720 (TFTGAIDHES…CTSSKFKLSS (447 aa)) the chain is on the lumenal side. The GH16 domain maps to 289–664 (TYLTQYQYPQ…YVRIYQPSNA (376 aa)). Asparagine 374, asparagine 461, asparagine 538, asparagine 563, and asparagine 691 each carry an N-linked (GlcNAc...) asparagine glycan.

Belongs to the SKN1/KRE6 family. The cytoplasmic domain interacts with the actin patch assembly proteins LAS17 and SLA1. Interacts with KEG1.

It localises to the golgi apparatus membrane. Involved in the synthesis of (1-&gt;6)- and (1-&gt;3)-beta-D-glucan polymers of the yeast cell wall in vivo. It is required for full activity of beta-glucan synthase in vitro. May be involved in the maturation and transport of cell wall proteins (CWP) to the cell wall. May act as a transglucosidase and contribute to the construction of a protein-bound glucan-structure that acts as an acceptor site for the addition of (1-&gt;6)-beta-D-glucan at the cell surface. The protein is Beta-glucan synthesis-associated protein KRE6 (KRE6) of Saccharomyces cerevisiae (strain ATCC 204508 / S288c) (Baker's yeast).